The primary structure comprises 236 residues: Bidirectional sugar transporter SWEET2 (236 aa).

At 1-15 the chain is on the extracellular side; that stretch reads MDVFAFNASLSMCKD. N-linked (GlcNAc...) asparagine glycosylation is present at Asn-7. Residues 16 to 36 traverse the membrane as a helical segment; that stretch reads VAGIAGNIFAFGLFVSPMPTF. The MtN3/slv 1 domain maps to 18 to 103; that stretch reads GIAGNIFAFG…ILFIMHTDKK (86 aa). At 37–50 the chain is on the cytoplasmic side; sequence RRIMRNKSTEQFSG. A helical transmembrane segment spans residues 51–71; it reads LPYIYALLNCLICLWYGTPFI. Residues 72 to 76 lie on the Extracellular side of the membrane; it reads SHSNA. A helical membrane pass occupies residues 77 to 97; the sequence is MLMTVNSVGATFQLCYIILFI. Topologically, residues 98 to 108 are cytoplasmic; sequence MHTDKKNKMKM. Residues 109 to 129 traverse the membrane as a helical segment; it reads LGLLFVVFAVVGVIVAGSLQI. Residues 130–137 are Extracellular-facing; it reads PDQLTRWY. A helical transmembrane segment spans residues 138 to 158; the sequence is FVGFLSCGSLVSMFASPLFVI. The region spanning 138–221 is the MtN3/slv 2 domain; the sequence is FVGFLSCGSL…LALYCYYHRN (84 aa). Residues 159–170 lie on the Cytoplasmic side of the membrane; that stretch reads NLVIRTKSVEFM. The helical transmembrane segment at 171 to 191 threads the bilayer; the sequence is PFYLSLSTFLMSASFLLYGLF. Topologically, residues 192–194 are extracellular; that stretch reads NSD. Residues 195–215 form a helical membrane-spanning segment; it reads AFVYTPNGIGTILGIVQLALY. The Cytoplasmic portion of the chain corresponds to 216–236; sequence CYYHRNSIEEETKEPLIVSYV.

This sequence belongs to the SWEET sugar transporter family. In terms of assembly, forms heterooligomers with SWEET17.

It localises to the cell membrane. Mediates both low-affinity uptake and efflux of sugar across the plasma membrane. The chain is Bidirectional sugar transporter SWEET2 from Arabidopsis thaliana (Mouse-ear cress).